We begin with the raw amino-acid sequence, 153 residues long: NADPH-dependent 7-cyano-7-deazaguanine reductase (153 aa).

The active-site Thioimide intermediate is Cys51. The active-site Proton donor is the Asp58. Substrate contacts are provided by residues 73–75 and 92–93; these read VES and HE.

It belongs to the GTP cyclohydrolase I family. QueF type 1 subfamily.

Its subcellular location is the cytoplasm. The catalysed reaction is 7-aminomethyl-7-carbaguanine + 2 NADP(+) = 7-cyano-7-deazaguanine + 2 NADPH + 3 H(+). It functions in the pathway tRNA modification; tRNA-queuosine biosynthesis. Catalyzes the NADPH-dependent reduction of 7-cyano-7-deazaguanine (preQ0) to 7-aminomethyl-7-deazaguanine (preQ1). This chain is NADPH-dependent 7-cyano-7-deazaguanine reductase, found in Granulibacter bethesdensis (strain ATCC BAA-1260 / CGDNIH1).